A 224-amino-acid polypeptide reads, in one-letter code: Ribose-5-phosphate isomerase A (224 aa).

Substrate is bound by residues 34–37 (TGST), 87–90 (DGAD), and 100–103 (KGGG). Glutamate 109 acts as the Proton acceptor in catalysis. Lysine 127 contributes to the substrate binding site.

This sequence belongs to the ribose 5-phosphate isomerase family. As to quaternary structure, homodimer.

The enzyme catalyses aldehydo-D-ribose 5-phosphate = D-ribulose 5-phosphate. Its pathway is carbohydrate degradation; pentose phosphate pathway; D-ribose 5-phosphate from D-ribulose 5-phosphate (non-oxidative stage): step 1/1. Catalyzes the reversible conversion of ribose-5-phosphate to ribulose 5-phosphate. This chain is Ribose-5-phosphate isomerase A, found in Francisella tularensis subsp. tularensis (strain FSC 198).